The following is a 332-amino-acid chain: Tetraacyldisaccharide 4'-kinase (332 aa).

55 to 62 (GVGGSGKT) contributes to the ATP binding site.

This sequence belongs to the LpxK family.

It catalyses the reaction a lipid A disaccharide + ATP = a lipid IVA + ADP + H(+). The protein operates within glycolipid biosynthesis; lipid IV(A) biosynthesis; lipid IV(A) from (3R)-3-hydroxytetradecanoyl-[acyl-carrier-protein] and UDP-N-acetyl-alpha-D-glucosamine: step 6/6. Its function is as follows. Transfers the gamma-phosphate of ATP to the 4'-position of a tetraacyldisaccharide 1-phosphate intermediate (termed DS-1-P) to form tetraacyldisaccharide 1,4'-bis-phosphate (lipid IVA). The chain is Tetraacyldisaccharide 4'-kinase from Acidithiobacillus ferrooxidans (strain ATCC 53993 / BNL-5-31) (Leptospirillum ferrooxidans (ATCC 53993)).